Consider the following 328-residue polypeptide: MGSNSTSSAESNCNATYLPFQYSLYATTYIFIFIPGLLANSAALWVLCRFISKKNKAIIFMINLSVADLAHILSLPLRIYYYINRHWPFQRALCLLCFYLKYLNMYASIFFLTCISLQRCLFLLKPFRARNWKRRYDVGISAVIWIVVGTACLPFPILRNAGLANSTDSCFADLGYKQMDAVVLVTMVVIAELAGFVIPVITIACCTWKTTVSLKHPPIAFQGISERKKALRMVFMCAAVFVICFTPYHINFIFYTMVKESIITSCPTVKSTLYFHPFSLCLASLCCLLDPILYYFMASEFRDQLSRHGSSVTRSRLMSRESGSSMVN.

Residues 1–27 (MGSNSTSSAESNCNATYLPFQYSLYAT) are Extracellular-facing. N-linked (GlcNAc...) asparagine glycosylation is found at Asn4 and Asn14. Residues 28–48 (TYIFIFIPGLLANSAALWVLC) form a helical membrane-spanning segment. The Cytoplasmic portion of the chain corresponds to 49–56 (RFISKKNK). The chain crosses the membrane as a helical span at residues 57–77 (AIIFMINLSVADLAHILSLPL). At 78–91 (RIYYYINRHWPFQR) the chain is on the extracellular side. A helical membrane pass occupies residues 92–112 (ALCLLCFYLKYLNMYASIFFL). A disulfide bridge links Cys94 with Cys170. The Cytoplasmic segment spans residues 113 to 137 (TCISLQRCLFLLKPFRARNWKRRYD). Residues 138-158 (VGISAVIWIVVGTACLPFPIL) form a helical membrane-spanning segment. The Extracellular portion of the chain corresponds to 159–182 (RNAGLANSTDSCFADLGYKQMDAV). The chain crosses the membrane as a helical span at residues 183–203 (VLVTMVVIAELAGFVIPVITI). Residues 204-233 (ACCTWKTTVSLKHPPIAFQGISERKKALRM) are Cytoplasmic-facing. A helical transmembrane segment spans residues 234-254 (VFMCAAVFVICFTPYHINFIF). Residues 255 to 277 (YTMVKESIITSCPTVKSTLYFHP) lie on the Extracellular side of the membrane. The helical transmembrane segment at 278 to 298 (FSLCLASLCCLLDPILYYFMA) threads the bilayer. Residues 299-328 (SEFRDQLSRHGSSVTRSRLMSRESGSSMVN) are Cytoplasmic-facing.

Belongs to the G-protein coupled receptor 1 family.

Its subcellular location is the cell membrane. Functionally, putative receptor for purines coupled to G-proteins. In Mus musculus (Mouse), this protein is Putative P2Y purinoceptor 10 (P2ry10).